The sequence spans 126 residues: Adenosine 5'-monophosphoramidase HINT1 (126 aa).

At alanine 2 the chain carries N-acetylalanine. Residues isoleucine 18–glycine 126 form the HIT domain. Residues lysine 21 and lysine 30 each carry the N6-acetyllysine modification. Aspartate 43–isoleucine 44 provides a ligand contact to AMP. Phosphoserine is present on residues serine 45 and serine 72. Residues asparagine 99, glycine 105–serine 107, and histidine 112–histidine 114 each bind AMP. The Histidine triad motif motif lies at histidine 110 to histidine 114. Histidine 112 (tele-AMP-histidine intermediate) is an active-site residue.

It belongs to the HINT family. In terms of assembly, homodimer. Interacts with CDK7. Interacts with RUVBL1 and RUVBL2 and is associated with the LEF1/TCF1-CTNNB1 complex and with a KAT5 histone acetyltransferase complex. Identified in a complex with MITF and CTNNB1. Interacts with CDC34 and RBX1, and is part of a SCF (SKP2-CUL1-F-box protein) E3 ubiquitin-protein ligase complex. Interacts with SUMO1, SUMO2 and RGS17. Interacts with the Ten-1 ICD form of TENM1. Interacts with CALM1; interaction increases in the presence of calcium ions. In terms of tissue distribution, widely expressed.

It is found in the cytoplasm. The protein localises to the nucleus. It catalyses the reaction adenosine 5'-phosphoramidate + H2O = AMP + NH4(+). In terms of biological role, exhibits adenosine 5'-monophosphoramidase activity, hydrolyzing purine nucleotide phosphoramidates with a single phosphate group such as adenosine 5'monophosphoramidate (AMP-NH2) to yield AMP and NH2. Hydrolyzes adenosine 5'monophosphomorpholidate (AMP-morpholidate) and guanosine 5'monophosphomorpholidate (GMP-morpholidate). Hydrolyzes lysyl-AMP (AMP-N-epsilon-(N-alpha-acetyl lysine methyl ester)) generated by lysine tRNA ligase. Hydrolyzes Met-AMP, His-AMP, Asp-AMP, lysyl-GMP (GMP-N-epsilon-(N-alpha-acetyl lysine methyl ester)) and AMP-N-alanine methyl ester. Can also convert adenosine 5'-O-phosphorothioate and guanosine 5'-O-phosphorothioate to the corresponding nucleoside 5'-O-phosphates with concomitant release of hydrogen sulfide. In addition, functions as a scaffolding protein that modulates transcriptional activation by the LEF1/TCF1-CTNNB1 complex and by the complex formed with MITF and CTNNB1. Modulates p53/TP53 levels and p53/TP53-mediated apoptosis. Modulates proteasomal degradation of target proteins by the SCF (SKP2-CUL1-F-box protein) E3 ubiquitin-protein ligase complex. Also exhibits SUMO-specific isopeptidase activity, deconjugating SUMO1 from RANGAP1 and RGS17. The protein is Adenosine 5'-monophosphoramidase HINT1 (HINT1) of Oryctolagus cuniculus (Rabbit).